We begin with the raw amino-acid sequence, 103 residues long: Large ribosomal subunit protein bL21 (103 aa).

This sequence belongs to the bacterial ribosomal protein bL21 family. In terms of assembly, part of the 50S ribosomal subunit. Contacts protein L20.

In terms of biological role, this protein binds to 23S rRNA in the presence of protein L20. This chain is Large ribosomal subunit protein bL21, found in Azoarcus sp. (strain BH72).